The sequence spans 507 residues: Alkyl hydroperoxide reductase subunit F (507 aa).

207–222 (DVLIVGGGPASGSAAI) is a binding site for FAD. An intrachain disulfide couples Cys-335 to Cys-338. 347–361 (DVAVIGGGNSGVEAA) is an NAD(+) binding site. 467-477 (TNVPGIFAAGD) serves as a coordination point for FAD.

This sequence belongs to the class-II pyridine nucleotide-disulfide oxidoreductase family. As to quaternary structure, homodimer. FAD serves as cofactor.

In terms of biological role, serves to protect the cell against DNA damage by alkyl hydroperoxides. It can use either NADH or NADPH as electron donor for direct reduction of redox dyes or of alkyl hydroperoxides when combined with the AhpC protein. This chain is Alkyl hydroperoxide reductase subunit F (ahpF), found in Staphylococcus epidermidis (strain ATCC 12228 / FDA PCI 1200).